A 234-amino-acid chain; its full sequence is Large ribosomal subunit protein uL1 (234 aa).

The protein belongs to the universal ribosomal protein uL1 family. As to quaternary structure, part of the 50S ribosomal subunit.

In terms of biological role, binds directly to 23S rRNA. The L1 stalk is quite mobile in the ribosome, and is involved in E site tRNA release. Its function is as follows. Protein L1 is also a translational repressor protein, it controls the translation of the L11 operon by binding to its mRNA. The chain is Large ribosomal subunit protein uL1 from Helicobacter hepaticus (strain ATCC 51449 / 3B1).